Here is a 443-residue protein sequence, read N- to C-terminus: RILP-like protein homolog (443 aa).

An RH1 domain is found at 8 to 96 (EMGEMVLDAI…ESEKLEKAEF (89 aa)). The stretch at 59 to 315 (LELLEALATK…TLNEQLAELK (257 aa)) forms a coiled coil. Positions 282–401 (RPRYTTRELK…KSSESGIRKF (120 aa)) constitute an RH2 domain. A disordered region spans residues 311-394 (LAELKPPSQA…PDDAPWKKSS (84 aa)). Over residues 332–355 (DDSDEDDDGHVADNDDDDDEEEAA) the composition is skewed to acidic residues. A compositionally biased stretch (low complexity) spans 356-368 (AEANELEPPAAGE).

The protein belongs to the RILPL family. Interacts with Arl8 (in GTP-bound form).

The protein resides in the lysosome membrane. In terms of biological role, may have a role in lysosome distribution by interacting with Arl8. In Drosophila melanogaster (Fruit fly), this protein is RILP-like protein homolog.